The following is a 67-amino-acid chain: Conotoxin Cal6.35 (67 aa).

A signal peptide spans 1 to 22 (MKLTCVLIVAVLILTACQVIAA). 3 disulfides stabilise this stretch: Cys43–Cys53, Cys46–Cys59, and Cys52–Cys66.

This sequence belongs to the conotoxin O1 superfamily. In terms of tissue distribution, expressed by the venom duct.

Its subcellular location is the secreted. Its function is as follows. Probable neurotoxin. The sequence is that of Conotoxin Cal6.35 from Californiconus californicus (California cone).